A 394-amino-acid chain; its full sequence is Probable dual specificity protein phosphatase DDB_G0281963 (394 aa).

Residues 2-142 enclose the Tyrosine-protein phosphatase domain; the sequence is NDVSRIFPGF…LKKYELILKK (141 aa). Cys-86 (phosphocysteine intermediate) is an active-site residue. Residues 147 to 191 are disordered; sequence PQIVEKESEEEDDDEDDDDDDYDSDEDDDDDSEDDDFEEEFDNVV. Positions 153 to 188 are enriched in acidic residues; it reads ESEEEDDDEDDDDDDYDSDEDDDDDSEDDDFEEEFD.

Belongs to the protein-tyrosine phosphatase family. Non-receptor class dual specificity subfamily.

It carries out the reaction O-phospho-L-tyrosyl-[protein] + H2O = L-tyrosyl-[protein] + phosphate. The catalysed reaction is O-phospho-L-seryl-[protein] + H2O = L-seryl-[protein] + phosphate. The enzyme catalyses O-phospho-L-threonyl-[protein] + H2O = L-threonyl-[protein] + phosphate. Has a dual specificity toward Ser/Thr and Tyr-containing proteins. This Dictyostelium discoideum (Social amoeba) protein is Probable dual specificity protein phosphatase DDB_G0281963.